Reading from the N-terminus, the 379-residue chain is Alkanesulfonate monooxygenase (379 aa).

The protein belongs to the SsuD family.

It catalyses the reaction an alkanesulfonate + FMNH2 + O2 = an aldehyde + FMN + sulfite + H2O + 2 H(+). Functionally, catalyzes the desulfonation of aliphatic sulfonates. The chain is Alkanesulfonate monooxygenase from Pseudomonas syringae pv. syringae (strain B728a).